We begin with the raw amino-acid sequence, 392 residues long: Small ribosomal subunit protein bS1 (392 aa).

S1 motif domains are found at residues 16-90, 108-173, 194-262, and 279-348; these read GDKV…LSKR, DEVI…LSRK, GDVI…LSIK, and DDVI…LSIK. The segment at 361–380 is disordered; it reads ASTTQSYLEDDNDEDKPTLG.

The protein belongs to the bacterial ribosomal protein bS1 family.

Binds mRNA; thus facilitating recognition of the initiation point. It is needed to translate mRNA with a short Shine-Dalgarno (SD) purine-rich sequence. The polypeptide is Small ribosomal subunit protein bS1 (rpsA) (Staphylococcus epidermidis (strain ATCC 35984 / DSM 28319 / BCRC 17069 / CCUG 31568 / BM 3577 / RP62A)).